The sequence spans 1071 residues: MPAIMTMLADHAARQLLDFSQKLDINLLDNVVNCLYHGEGAQQRMAQEVLTHLKEHPDAWTRVDTILEFSQNMNTKYYGLQILENVIKTRWKILPRNQCEGIKKYVVGLIIKTSSDPTCVEKEKVYIGKLNMILVQILKQEWPKHWPTFISDIVGASRTSESLCQNNMVILKLLSEEVFDFSSGQITQVKSKHLKDSMCNEFSQIFQLCQFVMENSQNAPLVHATLETLLRFLNWIPLGYIFETKLISTLIYKFLNVPMFRNVSLKCLTEIAGVSVSQYEEQFVTLFTLTMMQLKQMLPLNTNIRLAYSNGKDDEQNFIQNLSLFLCTFLKEHDQLIEKRLNLRETLMEALHYMLLVSEVEETEIFKICLEYWNHLAAELYRESPFSTSASPLLSGSQHFDVPPRRQLYLPMLFKVRLLMVSRMAKPEEVLVVENDQGEVVREFMKDTDSINLYKNMRETLVYLTHLDYVDTERIMTEKLHNQVNGTEWSWKNLNTLCWAIGSISGAMHEEDEKRFLVTVIKDLLGLCEQKRGKDNKAIIASNIMYIVGQYPRFLRAHWKFLKTVVNKLFEFMHETHDGVQDMACDTFIKIAQKCRRHFVQVQVGEVMPFIDEILNNINTIICDLQPQQVHTFYEAVGYMIGAQTDQTVQEHLIEKYMLLPNQVWDSIIQQATKNVDILKDPETVKQLGSILKTNVRACKAVGHPFVIQLGRIYLDMLNVYKCLSENISAAIQANGEMVTKQPLIRSMRTVKRETLKLISGWVSRSNDPQMVAENFVPPLLDAVLIDYQRNVPAAREPEVLSTMAIIVNKLGGHITAEIPQIFDAVFECTLNMINKDFEEYPEHRTNFFLLLQAVNSHCFPAFLAIPPTQFKLVLDSIIWAFKHTMRNVADTGLQILFTLLQNVAQEEAAAQSFYQTYFCDILQHIFSVVTDTSHTAGLTMHASILAYMFNLVEEGKISTSLNPGNPVNNQIFLQEYVANLLKSAFPHLQDAQVKLFVTGLFSLNQDIPAFKEHLRDFLVQIKEFAGEDTSDLFLEEREIALRQADEEKHKRQMSVPGIFNPHEIPEEMCD.

Residues 1-679 (MPAIMTMLAD…QQATKNVDIL (679 aa)) form a necessary for HTLV-1 Rex-mediated mRNA export region. The Importin N-terminal domain maps to 46–112 (AQEVLTHLKE…KKYVVGLIIK (67 aa)). HEAT repeat units lie at residues 217 to 240 (QNAP…PLGY), 241 to 277 (IFET…VSVS), 354 to 472 (MLLV…YVDT), 515 to 553 (RFLV…QYPR), 560 to 597 (KFLK…KCRR), and 602 to 639 (VQVG…AVGY). The segment at 327–450 (CTFLKEHDQL…VREFMKDTDS (124 aa)) is interaction with Ran and nuclear export complex formation. Ser-391 bears the Phosphoserine mark. Residues 411-414 (PMLF) form a necessary for HTLV-1 Rex multimerization region. Positions 411–481 (PMLFKVRLLM…TERIMTEKLH (71 aa)) are interaction with RANBP3. Lys-446 carries the post-translational modification N6-acetyllysine. The residue at position 448 (Thr-448) is a Phosphothreonine. A Phosphoserine modification is found at Ser-450. Phosphotyrosine is present on Tyr-454. N6-acetyllysine is present on Lys-693. 4 HEAT repeats span residues 775–813 (NFVP…KLGG), 885–916 (TMRN…SFYQ), 917–954 (TYFC…NLVE), and 1002–1039 (FSLN…EERE). Residues 800 to 820 (VLSTMAIIVNKLGGHITAEIP) form an interaction with HIV-1 Rev region. Position 1031 is a phosphoserine (Ser-1031).

This sequence belongs to the exportin family. In terms of assembly, found in a U snRNA export complex with PHAX/RNUXA, NCBP1/CBP80, NCBP2/CBP20, RAN, XPO1 and m7G-capped RNA. Component of a nuclear export receptor complex composed of KPNB1, RAN, SNUPN and XPO1. Found in a trimeric export complex with SNUPN, RAN and XPO1. Found in a nuclear export complex with RANBP3 and RAN. Found in a 60S ribosomal subunit export complex with NMD3, RAN, XPO1. Interacts with DDX3X, NMD3, NUP42, NUP88, NUP214, RANBP3 and TERT. Interacts with NEMF (via its N-terminus). Interacts with the monomeric form of BIRC5/survivin deacetylated at 'Lys-129'. Interacts with DTNBP1 and SERTAD2; the interactions translocate DTNBP1 and SERTAD2 out of the nucleus. Interacts with ATF2. Interacts with SLC35G1 and STIM1. Interacts with DCAF8. Interacts with CPEB3. Interacts with HAX1. Interacts with BOK; translocates to the cytoplasm. Interacts with HSP90AB1. Interacts with LRPPRC; interacts with LRPPRC alone and also when LRPPRC is in complex with EIF4E and with EIF4E sensitivity element (4ESE)-containing mRNAs to form an EIF4E-dependent mRNA export complex. (Microbial infection) Interacts with HIV-1 Rev. As to quaternary structure, (Microbial infection) Interacts with HTLV-1 Rex. In terms of assembly, (Microbial infection) Interacts with influenza A nucleoprotein. (Microbial infection) Interacts with Epstein-Barr virus protein BMLF1. As to quaternary structure, (Microbial infection) Part of a tetrameric complex composed of CRM1, importin alpha/beta dimer and the Venezuelan equine encephalitis virus (VEEV) capsid; this complex blocks the receptor-mediated transport through the nuclear pore. In terms of assembly, (Microbial infection) Interacts with SARS-CoV virus protein ORF9b; this interaction mediates protein ORF9b export out of the nucleus. In terms of tissue distribution, expressed in heart, brain, placenta, lung, liver, skeletal muscle, pancreas, spleen, thymus, prostate, testis, ovary, small intestine, colon and peripheral blood leukocytes. Not expressed in the kidney.

It localises to the cytoplasm. The protein resides in the nucleus. Its subcellular location is the nucleoplasm. The protein localises to the cajal body. It is found in the nucleolus. Functionally, mediates the nuclear export of cellular proteins (cargos) bearing a leucine-rich nuclear export signal (NES) and of RNAs. In the nucleus, in association with RANBP3, binds cooperatively to the NES on its target protein and to the GTPase RAN in its active GTP-bound form (Ran-GTP). Docking of this complex to the nuclear pore complex (NPC) is mediated through binding to nucleoporins. Upon transit of a nuclear export complex into the cytoplasm, disassembling of the complex and hydrolysis of Ran-GTP to Ran-GDP (induced by RANBP1 and RANGAP1, respectively) cause release of the cargo from the export receptor. The directionality of nuclear export is thought to be conferred by an asymmetric distribution of the GTP- and GDP-bound forms of Ran between the cytoplasm and nucleus. Involved in U3 snoRNA transport from Cajal bodies to nucleoli. Binds to late precursor U3 snoRNA bearing a TMG cap. (Microbial infection) Mediates the export of unspliced or incompletely spliced RNAs out of the nucleus from different viruses including HIV-1, HTLV-1 and influenza A. Interacts with, and mediates the nuclear export of HIV-1 Rev and HTLV-1 Rex proteins. Involved in HTLV-1 Rex multimerization. The chain is Exportin-1 (XPO1) from Homo sapiens (Human).